The sequence spans 408 residues: Probable acyl-CoA dehydrogenase 6 (408 aa).

Residue glutamate 265 is the Proton acceptor of the active site.

Belongs to the acyl-CoA dehydrogenase family. As to quaternary structure, homotetramer. It depends on FAD as a cofactor.

It carries out the reaction 3-methylbutanoyl-CoA + oxidized [electron-transfer flavoprotein] + H(+) = 3-methylbut-2-enoyl-CoA + reduced [electron-transfer flavoprotein]. It functions in the pathway amino-acid degradation; L-leucine degradation; (S)-3-hydroxy-3-methylglutaryl-CoA from 3-isovaleryl-CoA: step 1/3. In Caenorhabditis elegans, this protein is Probable acyl-CoA dehydrogenase 6 (acdh-6).